A 367-amino-acid chain; its full sequence is UDP-D-xylose:L-fucose alpha-1,3-D-xylosyltransferase (367 aa).

The segment covering 1–10 (MAQKQQTLHQ) has biased composition (polar residues). Residues 1–21 (MAQKQQTLHQQRPFSSSPRSY) are disordered. Over 1–35 (MAQKQQTLHQQRPFSSSPRSYSSISNRPIFLLSRN) the chain is Cytoplasmic. The segment covering 12 to 21 (RPFSSSPRSY) has biased composition (low complexity). The chain crosses the membrane as a helical; Signal-anchor for type II membrane protein span at residues 36 to 56 (GLLLVLLALFLLLGVFLPWPG). The Lumenal portion of the chain corresponds to 57–367 (SPLLLFPNKV…ALESPLGKLQ (311 aa)). Residues Asn-85, Asn-98, and Asn-173 are each glycosylated (N-linked (GlcNAc...) asparagine). Residues 196–198 (DVD) carry the DXD motif motif. Asn-228 and Asn-292 each carry an N-linked (GlcNAc...) asparagine glycan.

The protein belongs to the glycosyltransferase 77 family. It depends on Mn(2+) as a cofactor. Mg(2+) serves as cofactor. Glycosylated. As to expression, expressed in roots, rosette leaves, stems and flowers.

The protein localises to the golgi apparatus membrane. Its function is as follows. Catalyzes the transfer of D-xylose from UDP-alpha-D-xylose onto L-fucose. Probably involved in the biosynthesis of rhamnogalacturonan II (RG-II) through xylosylation of the internal fucose moiety of the A-chain of RG-II, a structurally complex pectic polysaccharide of the primary cell wall. RG-II is essential for the cell wall integrity of rapidly growing tissues such as roots and pollen tube growth and elongation. In Arabidopsis thaliana (Mouse-ear cress), this protein is UDP-D-xylose:L-fucose alpha-1,3-D-xylosyltransferase.